We begin with the raw amino-acid sequence, 344 residues long: Phenylalanine--tRNA ligase alpha subunit (344 aa).

Residue E261 participates in Mg(2+) binding.

It belongs to the class-II aminoacyl-tRNA synthetase family. Phe-tRNA synthetase alpha subunit type 1 subfamily. In terms of assembly, tetramer of two alpha and two beta subunits. Mg(2+) serves as cofactor.

The protein localises to the cytoplasm. The enzyme catalyses tRNA(Phe) + L-phenylalanine + ATP = L-phenylalanyl-tRNA(Phe) + AMP + diphosphate + H(+). In Ehrlichia ruminantium (strain Gardel), this protein is Phenylalanine--tRNA ligase alpha subunit.